We begin with the raw amino-acid sequence, 110 residues long: Small ribosomal subunit protein eS25 (110 aa).

A disordered region spans residues 1–39 (MPPKAAGGKSKQIQASKAAAKGSSGGAGRKKWSKGRSRE).

This sequence belongs to the eukaryotic ribosomal protein eS25 family.

This is Small ribosomal subunit protein eS25 (rps25) from Dictyostelium discoideum (Social amoeba).